Consider the following 337-residue polypeptide: Cell-surface associated glycoprotein DFI1 (337 aa).

Topologically, residues 1-21 (MEKLSINNNNNNRRYQSRRFD) are cytoplasmic. A helical transmembrane segment spans residues 22-42 (GITIIRIVVLVFIVTVSTYFV). Residues 43–269 (NSYTCNQPHH…NGGGLSHTNR (227 aa)) lie on the Extracellular side of the membrane. 4 N-linked (GlcNAc...) asparagine glycosylation sites follow: N53, N65, N87, and N100. Low complexity-rich tracts occupy residues 124-220 (SSTF…TSAS) and 241-259 (SVIS…KNND). Disordered regions lie at residues 124 to 224 (SSTF…QHVT) and 241 to 265 (SVIS…GGLS). Residues 270-290 (IVVGVVVGVGGSILIGLLAVL) form a helical membrane-spanning segment. Residues 273 to 277 (GVVVG) carry the Glycophorin A motif. Topologically, residues 291-337 (FYLRKRNNRDYEGGWTFWRKNEKLGSDEFFNGELGVRDRNINQGSNF) are cytoplasmic. The short motif at 301–314 (YEGGWTFWRKNEKL) is the Calmodulin-binding element.

This sequence belongs to the MID2 like cell wall stress sensor family. Cross-linked to the carbohydrate polymers of the cell wall. Post-translationally, O-glycosylated by MNT1 and MNT2. Also N-glycosylated.

It is found in the cell membrane. The protein localises to the cell septum. Its subcellular location is the secreted. It localises to the cell wall. Cell-surface associated glycoprotein that acts as a plasma membrane receptor-type protein which senses the presence of matrix. Binds to calmodulin in response to environmental conditions and initiates a signaling cascade that activates CEK1, thus promoting invasive filamentation. Involved in the maintenance of the cell wall. This is Cell-surface associated glycoprotein DFI1 from Candida albicans (strain SC5314 / ATCC MYA-2876) (Yeast).